The following is a 444-amino-acid chain: Orexin receptor type 2 (444 aa).

A compositionally biased stretch (basic and acidic residues) spans 1 to 10 (MSGTKLEDSP). The segment at 1–20 (MSGTKLEDSPPCRNWSSASE) is disordered. Over 1–54 (MSGTKLEDSPPCRNWSSASELNETQEPFLNPTDYDDEEFLRYLWREYLHPKEYE) the chain is Extracellular. Residues Asn14 and Asn22 are each glycosylated (N-linked (GlcNAc...) asparagine). The interval 33 to 49 (DYDDEEFLRYLWREYLH) is required for response to orexin-A. Residues 55–75 (WVLIAGYIIVFVVALIGNVLV) traverse the membrane as a helical segment. The Cytoplasmic segment spans residues 76-88 (CVAVWKNHHMRTV). A helical transmembrane segment spans residues 89 to 110 (TNYFIVNLSLADVLVTITCLPA). At 111–127 (TLVVDITETWFFGQSLC) the chain is on the extracellular side. Cys127 and Cys210 are joined by a disulfide. Residues 128-150 (KVIPYLQTVSVSVSVLTLSCIAL) traverse the membrane as a helical segment. The Cytoplasmic segment spans residues 151-170 (DRWYAICHPLMFKSTAKRAR). Residues 171–191 (NSIVIIWIVSCIIMIPQAIVM) form a helical membrane-spanning segment. Topologically, residues 192 to 222 (ECSTVFPGLANKTTLFTVCDERWGGEIYPKM) are extracellular. Residue Asn202 is glycosylated (N-linked (GlcNAc...) asparagine). Residues 223 to 243 (YHICFFLVTYMAPLCLMVLAY) form a helical membrane-spanning segment. Over 244–304 (LQIFRKLWCR…QIRARRKTAR (61 aa)) the chain is Cytoplasmic. The helical transmembrane segment at 305 to 326 (MLMIVLLVFAICYLPISILNVL) threads the bilayer. Asn324 serves as a coordination point for suvorexant. Over 327 to 342 (KRVFGMFAHTEDRETV) the chain is Extracellular. The helical transmembrane segment at 343–366 (YAWFTFSHWLVYANSAANPIIYNF) threads the bilayer. At 367-444 (LSGKFREEFK…ANGAGPLQNW (78 aa)) the chain is on the cytoplasmic side.

It belongs to the G-protein coupled receptor 1 family.

Its subcellular location is the cell membrane. In terms of biological role, nonselective, high-affinity receptor for both orexin-A and orexin-B neuropeptides. Triggers an increase in cytoplasmic Ca(2+) levels in response to orexin-A binding. This chain is Orexin receptor type 2 (HCRTR2), found in Homo sapiens (Human).